The following is a 343-amino-acid chain: Polyprenyl transferase spyF (343 aa).

A run of 8 helical transmembrane segments spans residues 38-58 (WLAVFSGGVSLPILIGNSHPL), 62-82 (VSVWATLLAGANQIATHPASI), 92-112 (LLCLICGYIFCGAGMVWNDWI), 138-158 (GFIWMMVHVAAMIPVTISTIL), 170-190 (LYIYPQYFLGFSLAWPGAIGW), 241-261 (AYVAAGSRIHMFLVILAGLVL), 273-293 (SGWLWASWMCVWALSFVHQLL), and 311-331 (FALGVWTIVACAAELGLSSGM).

The protein belongs to the UbiA prenyltransferase family. Requires Mg(2+) as cofactor.

The protein localises to the membrane. It catalyses the reaction triacetate lactone + (2E,6E,10E)-geranylgeranyl diphosphate = (2E,6E,10E)-geranylgeranyl-triacetate lactone + diphosphate. The protein operates within secondary metabolite biosynthesis; terpenoid biosynthesis. In terms of biological role, polyprenyl transferase; part of the gene cluster that mediates the biosynthesis of meroterpenoids called sartorypyrones. Within the pathway, spyF catalyzes the prenylation of triacetic acid lactone (TAL) to produce geranylgeranyl-triacetate lactone. The biosynthesis of sartorypyrones begins with the production of triacetic acid lactone (TAL) by the NR-PKS spyA using one molecule of acetyl-CoA and two molecules of malonyl-CoA. The prenyltransferase spyF then conjugates geranylgeranyl pyrophosphate (GGPP) to TAL to form geranylgeranyl-triacetate lactone, for which the pathway-specific geranylgeranyl pyrophosphate synthase (GGPS) spyE is required to provide GGPP. Subsequently, geranylgeranyl-triacetate lactone is epoxidized at the terminal olein by the FAD-dependent monooxygenase spyC, followed by cyclization of the terpenoid component catalyzed by the terpene cyclase spyD to produce both the bicyclic sartorypyrone F and the monocyclic sartorypyrone D. Finally, the last step of the biosynthesis involves the acetylation of the meroterpenoids sartorypyrones D and F by the acetyltransferase SpyB to produce sartorypyrones A and G, respectively. The protein is Polyprenyl transferase spyF of Aspergillus fumigatus (strain ATCC MYA-4609 / CBS 101355 / FGSC A1100 / Af293) (Neosartorya fumigata).